The primary structure comprises 732 residues: Acylamino-acid-releasing enzyme (732 aa).

Methionine 1 is subject to Blocked amino end (Met); alternate. Methionine 1 carries the N-acetylmethionine; alternate modification. Serine 185 and serine 187 each carry phosphoserine. Residues serine 587, aspartate 675, and histidine 707 each act as charge relay system in the active site.

Belongs to the peptidase S9C family. Homotetramer.

It is found in the cytoplasm. The enzyme catalyses Cleavage of an N-acetyl or N-formyl amino acid from the N-terminus of a polypeptide.. Homotetramerization is required for activity. Tetramerization results in the formation of a gated channel which is involved in substrate selection and substrate access to the catalytic sites. Its function is as follows. This enzyme catalyzes the hydrolysis of the N-terminal peptide bond of an N-acetylated peptide to generate an N-acetylated amino acid and a peptide with a free N-terminus. It preferentially cleaves off Ac-Ala, Ac-Met and Ac-Ser. Also, involved in the degradation of oxidized and glycated proteins. This Rattus norvegicus (Rat) protein is Acylamino-acid-releasing enzyme (Apeh).